The chain runs to 590 residues: Rho GTPase-activating protein 36 (590 aa).

The 201-residue stretch at 214–414 (MSLNPIAQQI…AMIDNWDILF (201 aa)) folds into the Rho-GAP domain. The interval 526-590 (IPNNEDTDSD…KGKFATRFFP (65 aa)) is disordered.

As to quaternary structure, may interacts (via the Rho-GAP domain) with the active form of RAC1.

In terms of biological role, GTPase activator for the Rho-type GTPases by converting them to an inactive GDP-bound state. This chain is Rho GTPase-activating protein 36 (Arhgap36), found in Mus musculus (Mouse).